The primary structure comprises 191 residues: Prophage tail fiber assembly protein homolog TfaR (191 aa).

It belongs to the tfa family.

The polypeptide is Prophage tail fiber assembly protein homolog TfaR (tfaR) (Escherichia coli (strain K12)).